A 94-amino-acid polypeptide reads, in one-letter code: Putative regulatory protein THA_332 (94 aa).

Belongs to the RemA family.

In Thermosipho africanus (strain TCF52B), this protein is Putative regulatory protein THA_332.